Consider the following 348-residue polypeptide: MLVAPPAFAEAQVLLQRLLNHESLGAVQARALMEQWSSGTLPEALSGALLAALQSKGVSAQELAAMAQVLQEQAVAVEASDRREPLVDTCGTGGDGAETFNISTAVAFVTAAAGVKVAKHGNRSASGRVGSADVLEALGLNLTAPSDRIHAAVDEVGITFLFAPGWHPAMKAVAPLRKILGVRTVFNLLGPLVNPLRPTGQVIGVYNPGLLPTISGALAELGVRRAIVLHGREGLDEGGLADCMDLAIVREGQLSQQVVDPRDLGLTQAPTVALKGGSVEENADILKAVLQGKGTRAQQDAVLLNAALALEVGEQVDRLDQGIGLARSVLASGAAWQKLTQLAAFLQS.

Residues G91, 94 to 95, T99, 101 to 104, 119 to 127, and S131 contribute to the 5-phospho-alpha-D-ribose 1-diphosphate site; these read GD, NIST, and KHGNRSASG. G91 is an anthranilate binding site. Mg(2+) is bound at residue S103. N122 serves as a coordination point for anthranilate. R177 is an anthranilate binding site. D236 and E237 together coordinate Mg(2+).

This sequence belongs to the anthranilate phosphoribosyltransferase family. As to quaternary structure, homodimer. It depends on Mg(2+) as a cofactor.

The enzyme catalyses N-(5-phospho-beta-D-ribosyl)anthranilate + diphosphate = 5-phospho-alpha-D-ribose 1-diphosphate + anthranilate. Its pathway is amino-acid biosynthesis; L-tryptophan biosynthesis; L-tryptophan from chorismate: step 2/5. Catalyzes the transfer of the phosphoribosyl group of 5-phosphorylribose-1-pyrophosphate (PRPP) to anthranilate to yield N-(5'-phosphoribosyl)-anthranilate (PRA). The sequence is that of Anthranilate phosphoribosyltransferase from Synechococcus sp. (strain ATCC 27144 / PCC 6301 / SAUG 1402/1) (Anacystis nidulans).